A 123-amino-acid polypeptide reads, in one-letter code: Ribonuclease P protein component (123 aa).

Belongs to the RnpA family. In terms of assembly, consists of a catalytic RNA component (M1 or rnpB) and a protein subunit.

The catalysed reaction is Endonucleolytic cleavage of RNA, removing 5'-extranucleotides from tRNA precursor.. RNaseP catalyzes the removal of the 5'-leader sequence from pre-tRNA to produce the mature 5'-terminus. It can also cleave other RNA substrates such as 4.5S RNA. The protein component plays an auxiliary but essential role in vivo by binding to the 5'-leader sequence and broadening the substrate specificity of the ribozyme. The chain is Ribonuclease P protein component from Streptomyces bikiniensis.